The primary structure comprises 127 residues: Membrane-bound lysozyme inhibitor of C-type lysozyme (127 aa).

The signal sequence occupies residues methionine 1–alanine 18. Residue cysteine 19 is the site of N-palmitoyl cysteine attachment. Cysteine 19 is lipidated: S-diacylglycerol cysteine. A disulfide bridge links cysteine 51 with cysteine 124.

Belongs to the MliC family. Type 2 subfamily. As to quaternary structure, homodimer.

Its subcellular location is the cell outer membrane. Functionally, specifically inhibits C-type lysozymes. The polypeptide is Membrane-bound lysozyme inhibitor of C-type lysozyme (Pseudomonas aeruginosa (strain ATCC 15692 / DSM 22644 / CIP 104116 / JCM 14847 / LMG 12228 / 1C / PRS 101 / PAO1)).